A 374-amino-acid polypeptide reads, in one-letter code: Queuine tRNA-ribosyltransferase (374 aa).

Aspartate 91 (proton acceptor) is an active-site residue. Substrate contacts are provided by residues 91-95 (DSGGY), aspartate 145, glutamine 189, and glycine 216. Residues 247–253 (GVGTVPD) are RNA binding. Aspartate 266 acts as the Nucleophile in catalysis. The interval 271 to 275 (TRNAR) is RNA binding; important for wobble base 34 recognition. Positions 304, 306, 309, and 335 each coordinate Zn(2+).

It belongs to the queuine tRNA-ribosyltransferase family. As to quaternary structure, homodimer. Within each dimer, one monomer is responsible for RNA recognition and catalysis, while the other monomer binds to the replacement base PreQ1. Zn(2+) is required as a cofactor.

It catalyses the reaction 7-aminomethyl-7-carbaguanine + guanosine(34) in tRNA = 7-aminomethyl-7-carbaguanosine(34) in tRNA + guanine. It functions in the pathway tRNA modification; tRNA-queuosine biosynthesis. Its function is as follows. Catalyzes the base-exchange of a guanine (G) residue with the queuine precursor 7-aminomethyl-7-deazaguanine (PreQ1) at position 34 (anticodon wobble position) in tRNAs with GU(N) anticodons (tRNA-Asp, -Asn, -His and -Tyr). Catalysis occurs through a double-displacement mechanism. The nucleophile active site attacks the C1' of nucleotide 34 to detach the guanine base from the RNA, forming a covalent enzyme-RNA intermediate. The proton acceptor active site deprotonates the incoming PreQ1, allowing a nucleophilic attack on the C1' of the ribose to form the product. After dissociation, two additional enzymatic reactions on the tRNA convert PreQ1 to queuine (Q), resulting in the hypermodified nucleoside queuosine (7-(((4,5-cis-dihydroxy-2-cyclopenten-1-yl)amino)methyl)-7-deazaguanosine). The chain is Queuine tRNA-ribosyltransferase from Leptospira borgpetersenii serovar Hardjo-bovis (strain JB197).